The following is a 442-amino-acid chain: Histidinol dehydrogenase (442 aa).

3 residues coordinate NAD(+): Tyr-138, Gln-196, and Asn-219. Substrate-binding residues include Ser-245, Gln-267, and His-270. Zn(2+) contacts are provided by Gln-267 and His-270. Active-site proton acceptor residues include Glu-334 and His-335. Residues His-335, Asp-368, Glu-422, and His-427 each contribute to the substrate site. A Zn(2+)-binding site is contributed by Asp-368. Residue His-427 participates in Zn(2+) binding.

This sequence belongs to the histidinol dehydrogenase family. Homodimer. Zn(2+) is required as a cofactor.

It catalyses the reaction L-histidinol + 2 NAD(+) + H2O = L-histidine + 2 NADH + 3 H(+). Its pathway is amino-acid biosynthesis; L-histidine biosynthesis; L-histidine from 5-phospho-alpha-D-ribose 1-diphosphate: step 9/9. In terms of biological role, catalyzes the sequential NAD-dependent oxidations of L-histidinol to L-histidinaldehyde and then to L-histidine. This chain is Histidinol dehydrogenase, found in Pectobacterium atrosepticum (strain SCRI 1043 / ATCC BAA-672) (Erwinia carotovora subsp. atroseptica).